The sequence spans 180 residues: Probable chorismate pyruvate-lyase (180 aa).

3 residues coordinate substrate: Arg73, Leu111, and Glu170.

The protein belongs to the UbiC family.

The protein resides in the cytoplasm. The catalysed reaction is chorismate = 4-hydroxybenzoate + pyruvate. The protein operates within cofactor biosynthesis; ubiquinone biosynthesis. Functionally, removes the pyruvyl group from chorismate, with concomitant aromatization of the ring, to provide 4-hydroxybenzoate (4HB) for the ubiquinone pathway. The polypeptide is Probable chorismate pyruvate-lyase (Nitrosospira multiformis (strain ATCC 25196 / NCIMB 11849 / C 71)).